A 176-amino-acid chain; its full sequence is Large ribosomal subunit protein uL10 (176 aa).

Belongs to the universal ribosomal protein uL10 family. As to quaternary structure, part of the ribosomal stalk of the 50S ribosomal subunit. The N-terminus interacts with L11 and the large rRNA to form the base of the stalk. The C-terminus forms an elongated spine to which L12 dimers bind in a sequential fashion forming a multimeric L10(L12)X complex.

Its function is as follows. Forms part of the ribosomal stalk, playing a central role in the interaction of the ribosome with GTP-bound translation factors. The protein is Large ribosomal subunit protein uL10 of Leuconostoc citreum (strain KM20).